A 40-amino-acid polypeptide reads, in one-letter code: Ribosome-inactivating protein saporin-1 (40 aa).

It belongs to the ribosome-inactivating protein family. Type 1 RIP subfamily.

The catalysed reaction is Endohydrolysis of the N-glycosidic bond at one specific adenosine on the 28S rRNA.. In terms of biological role, ribosome-inactivating protein of type 1, inhibits protein synthesis in animal cells. This chain is Ribosome-inactivating protein saporin-1 (SAP1), found in Saponaria officinalis (Common soapwort).